The primary structure comprises 1498 residues: Methyl-CpG-binding domain protein 5 (1498 aa).

The region spanning aspartate 11 to alanine 81 is the MBD domain. The segment at aspartate 57–leucine 68 is required for interaction with ASXL1/2/3. Disordered stretches follow at residues proline 199 to serine 274, histidine 329 to proline 350, arginine 452 to isoleucine 521, leucine 594 to alanine 642, and asparagine 1350 to histidine 1377. A compositionally biased stretch (pro residues) spans proline 333–serine 343. Composition is skewed to low complexity over residues serine 499–lysine 511 and leucine 594–asparagine 613. Residues threonine 614–phenylalanine 624 are compositionally biased toward polar residues. Residues arginine 1385–arginine 1409 form the PWWP domain. The disordered stretch occupies residues serine 1473–arginine 1498. Over residues arginine 1487–arginine 1498 the composition is skewed to basic residues.

Core component of the polycomb repressive deubiquitinase (PR-DUB) complex, at least composed of BAP1, one of ASXL1, ASXL2 or (probably) ASXL3, and one of MBD5 or MBD6. Distinct combinations of ASXL and MBD proteins may preferentially bind specific histone modification marks. The PR-DUB core associates with a number of accessory proteins, including FOXK1, FOXK2, KDM1B, HCFC1 and OGT; KDM1B specifically associates with ASXL2 PR-DUB complexes. Interacts (via MBD domain) with ASXL1, ASXL2 and ASXL3 (via PHD domain); the interaction is probably direct, mediates association with other PR-DUB complex core components. In terms of tissue distribution, expressed at highest levels in adult testis and Brain. Expressed at highest levels in the oocyte.

The protein resides in the nucleus. The protein localises to the chromosome. Its function is as follows. Non-catalytic component of the polycomb repressive deubiquitinase (PR-DUB) complex, a complex that specifically mediates deubiquitination of histone H2A monoubiquitinated at 'Lys-120' (H2AK119ub1). Important for stability of PR-DUB components and stimulating its ubiquitinase activity. As part of the PR-DUB complex, associates with chromatin enriched in histone marks H3K4me1, H3K4me3, and H3K27Ac, but not in H3K27me3. The PR-DUB complex is an epigenetic regulator of gene expression, including genes involved in cell growth and survivability. MBD5 and MBD6 containing complexes associate with distinct chromatin regions enriched in genes involved in different pathways. Heterochromatin recruitment is not mediated by DNA methylation. The PR-DUB complex is an epigenetic regulator of gene expression, including genes involved in development, cell communication, signaling, cell proliferation and cell viability. This chain is Methyl-CpG-binding domain protein 5 (Mbd5), found in Mus musculus (Mouse).